The chain runs to 377 residues: tRNA-specific 2-thiouridylase MnmA (377 aa).

Residues 22 to 29 (GMSGGVDS) and Met-48 each bind ATP. Residues 108-110 (NPD) form an interaction with target base in tRNA region. The active-site Nucleophile is Cys-113. Cys-113 and Cys-210 are disulfide-bonded. Residue Gly-138 participates in ATP binding. The interaction with tRNA stretch occupies residues 160–162 (KDQ). Cys-210 functions as the Cysteine persulfide intermediate in the catalytic mechanism. An interaction with tRNA region spans residues 322–323 (RY).

This sequence belongs to the MnmA/TRMU family.

The protein resides in the cytoplasm. It carries out the reaction S-sulfanyl-L-cysteinyl-[protein] + uridine(34) in tRNA + AH2 + ATP = 2-thiouridine(34) in tRNA + L-cysteinyl-[protein] + A + AMP + diphosphate + H(+). In terms of biological role, catalyzes the 2-thiolation of uridine at the wobble position (U34) of tRNA, leading to the formation of s(2)U34. In Shewanella amazonensis (strain ATCC BAA-1098 / SB2B), this protein is tRNA-specific 2-thiouridylase MnmA.